We begin with the raw amino-acid sequence, 414 residues long: Secernin-1 (414 aa).

Belongs to the peptidase C69 family. Secernin subfamily.

It localises to the cytoplasm. Regulates exocytosis in mast cells. Increases both the extent of secretion and the sensitivity of mast cells to stimulation with calcium. In Rattus norvegicus (Rat), this protein is Secernin-1 (Scrn1).